The sequence spans 481 residues: Neuronal acetylcholine receptor subunit eat-2 (481 aa).

A signal peptide spans 1–19 (MFLLLQILYILLFLNLADT). Residues 20 to 235 (SDDEYRLLKD…MHLKRRTMYY (216 aa)) lie on the Extracellular side of the membrane. Residue Asn93 is glycosylated (N-linked (GlcNAc...) asparagine). Cysteines 147 and 161 form a disulfide. 3 helical membrane passes run 236 to 256 (GLNWIIPSILISLSNILGFTM), 264 to 284 (VTLQITNFLSIMVFLAMVSEV), and 292 to 312 (IPIIAAFFSFAIVILGVSICV). Over 313 to 443 (SLITVNIFYR…WRFMAMVIDR (131 aa)) the chain is Cytoplasmic. Positions 356-384 (KPKREKKKEEEEDEESNAGGKEEESELIS) are disordered. Residues 444-464 (ASLFLFTGLIFGTTFVIFAAC) traverse the membrane as a helical segment.

This sequence belongs to the ligand-gated ion channel (TC 1.A.9) family. Acetylcholine receptor (TC 1.A.9.1) subfamily. Neuronal AChR seems to be composed of two different type of subunits: alpha and beta.

The protein resides in the postsynaptic cell membrane. It localises to the cell membrane. Its function is as follows. After binding acetylcholine, the AChR responds by an extensive change in conformation that affects all subunits and leads to opening of an ion-conducting channel across the plasma membrane. Nicotinic acetylcholine receptor in the MC pharyngeal motor neuron involved in pharyngeal pumping. Has a role in the determination of life span possibly via calorific restriction which affects growth rate, although this is independent of metabolic activity. The chain is Neuronal acetylcholine receptor subunit eat-2 from Caenorhabditis briggsae.